A 236-amino-acid polypeptide reads, in one-letter code: V-set and transmembrane domain-containing protein 2A (236 aa).

The signal sequence occupies residues 1–24; the sequence is MMGIFLVYVGFVFFSVLYVQQGLS. An Ig-like V-type domain is found at 27 to 143; that stretch reads AKFTEFPRNV…YGELQEHKAQ (117 aa). Asparagine 35 is a glycosylation site (N-linked (GlcNAc...) asparagine). Cysteine 48 and cysteine 127 are disulfide-bonded. A glycan (N-linked (GlcNAc...) asparagine) is linked at asparagine 175. Over residues 184–199 the composition is skewed to polar residues; that stretch reads IHGSANQRTHSTSSPQ. Residues 184–206 form a disordered region; it reads IHGSANQRTHSTSSPQVVAKIPK.

In terms of assembly, homodimer. In terms of processing, N-glycosylated. N-linked glycosylation is critical for secretion but not for preadipocyte cell differentiation activity.

The protein resides in the secreted. Plays a role in the regulation of the early stage of white and brown preadipocyte cell differentiation. Promotes adipogenic commitment of preadipocytes by increasing gene expression of the transcription factor PPARG in a BMP4-dependent signaling pathway. This chain is V-set and transmembrane domain-containing protein 2A, found in Homo sapiens (Human).